The following is a 364-amino-acid chain: Mannose-1-phosphate guanyltransferase (364 aa).

Belongs to the transferase hexapeptide repeat family.

It localises to the cytoplasm. It carries out the reaction alpha-D-mannose 1-phosphate + GTP + H(+) = GDP-alpha-D-mannose + diphosphate. The protein operates within nucleotide-sugar biosynthesis; GDP-alpha-D-mannose biosynthesis; GDP-alpha-D-mannose from alpha-D-mannose 1-phosphate (GTP route): step 1/1. Its function is as follows. Involved in cell wall synthesis where it is required for glycosylation. Involved in cell cycle progression through cell-size checkpoint. This is Mannose-1-phosphate guanyltransferase (mpg1) from Emericella nidulans (strain FGSC A4 / ATCC 38163 / CBS 112.46 / NRRL 194 / M139) (Aspergillus nidulans).